Here is a 194-residue protein sequence, read N- to C-terminus: Imidazoleglycerol-phosphate dehydratase (194 aa).

Belongs to the imidazoleglycerol-phosphate dehydratase family.

It is found in the cytoplasm. The enzyme catalyses D-erythro-1-(imidazol-4-yl)glycerol 3-phosphate = 3-(imidazol-4-yl)-2-oxopropyl phosphate + H2O. Its pathway is amino-acid biosynthesis; L-histidine biosynthesis; L-histidine from 5-phospho-alpha-D-ribose 1-diphosphate: step 6/9. The sequence is that of Imidazoleglycerol-phosphate dehydratase from Bacillus cereus (strain G9842).